A 434-amino-acid polypeptide reads, in one-letter code: Meiosis-specific kinetochore protein (434 aa).

Disordered regions lie at residues 1-102 (MDKI…PCET) and 249-289 (VFAE…PDNK). Residues 46 to 62 (KGKEQGLRKITEKKELS) are compositionally biased toward basic and acidic residues. Residues 64–76 (LTGSSSQRPSLLS) show a composition bias toward polar residues. A POLO box domain (PBD)-binding motif is present at residues 334–336 (STP). Residues 391-394 (EICC) form a required for localization to kinetochores region. Positions 404 to 424 (QMRRKDPAVKNRCSPPKDVPL) are disordered.

As to quaternary structure, interacts with CENPC. Interacts with PLK1; required for recruitment of PLK1 at kinetochores. In terms of tissue distribution, germ cell-specific. Expressed in both testis and ovary. Not expressed in other tissues.

It localises to the chromosome. The protein localises to the centromere. Its subcellular location is the kinetochore. Functionally, key regulator of kinetochore function during meiosis I: required both for mono-orientation of kinetochores on sister chromosomes and protection of centromeric cohesin from separase-mediated cleavage. Acts by facilitating kinetochore mono-orientation during meiosis I, when kinetochores on sister chromosomes face the same direction and are thus captured and pulled by spindle fibers from the same pole. Also required to prevent cleavage of cohesin at centromeres during meiosis I, possibly by acting as a regulator of the shugoshin-dependent protection pathway. Acts in collaboration with PLK1: required for PLK1 enrichment to kinetochores. Not required during meiosis II or mitosis. The chain is Meiosis-specific kinetochore protein from Mus musculus (Mouse).